A 464-amino-acid polypeptide reads, in one-letter code: Argininosuccinate lyase (464 aa).

The protein belongs to the lyase 1 family. Argininosuccinate lyase subfamily.

The protein resides in the cytoplasm. It catalyses the reaction 2-(N(omega)-L-arginino)succinate = fumarate + L-arginine. It participates in amino-acid biosynthesis; L-arginine biosynthesis; L-arginine from L-ornithine and carbamoyl phosphate: step 3/3. The polypeptide is Argininosuccinate lyase (Pseudomonas syringae pv. tomato (strain ATCC BAA-871 / DC3000)).